The sequence spans 158 residues: 2S seed storage albumin protein (158 aa).

Residues 1 to 21 form the signal peptide; sequence MTKFTILLISLLFCIAHTCSA. The Cell attachment site signature appears at 54-56; it reads RGD. Positions 65-81 are excised as a propeptide; that stretch reads NHILRTMRGRINYIRRN.

It belongs to the 2S seed storage albumins family. As to quaternary structure, the protein consists of two chains linked by 2 disulfide bonds. In terms of tissue distribution, expressed in cotyledons. Maximal expression in parenchyma cells undergoing DNA endoreduplication and cell expansion but not in actively dividing cells of the cotyledon.

In terms of biological role, this is a 2S seed storage protein. Its function is as follows. Binds to mammalian chromatin, preventing the normal formation of the kinetochore complex in the centromere and leading to the disruption of mitosis. The protein is 2S seed storage albumin protein of Glycine max (Soybean).